The sequence spans 476 residues: Probable flippase AglR (476 aa).

14 consecutive transmembrane segments (helical) span residues 7 to 29 (ASALQFGANVTQTFVGAIITIYV), 34 to 56 (GVGAFGIFALSAALVKWASIPAV), 83 to 103 (VLTGAIILVGLLALLGYSPFV), 112 to 132 (TQLVGGMFVSNVSFRLVLGGL), 146 to 166 (ALWGILSSLVKLALVYTGVGV), 168 to 188 (ALFYGEITSSIVIGIFGVYSL), 222 to 242 (WLDTIILGFFVSTSLVGIYEV), 246 to 266 (ISALFVLLPTAISKSTFPTIS), 287 to 307 (VAGVLAIPGLVGSVLVGGDIL), 310 to 330 (YGPSVSSVGVAVSVLVSLSVV), 354 to 373 (FRIGVIFITTNIILNVSLIP), 377 to 396 (VIGAAIATLLSMTLGSILAV), 409 to 429 (VSAIGSQFVSAGAMAVVLFTI), and 439 to 459 (IEVVLYVLAGATTYGFVLLSL).

It belongs to the AglR/Agl15 family.

The protein resides in the cell membrane. It participates in cell surface structure biogenesis; S-layer biogenesis. Functionally, involved in the assembly of a N-linked pentasaccharide that decorates the S-layer glycoprotein and flagellins. Probably mediates or contributes to the translocation of the dolichol-phosphate-mannose across the membrane. The chain is Probable flippase AglR (aglR) from Haloferax volcanii (strain ATCC 29605 / DSM 3757 / JCM 8879 / NBRC 14742 / NCIMB 2012 / VKM B-1768 / DS2) (Halobacterium volcanii).